Reading from the N-terminus, the 215-residue chain is Adenylate kinase (215 aa).

10-15 contributes to the ATP binding site; the sequence is GAGKGT. The tract at residues 30–59 is NMP; it reads STGDMFRAAIKDQTPLGQEAKSYMDKGELV. AMP-binding positions include Thr-31, Arg-36, 57-59, 85-88, and Gln-92; these read ELV and GFPR. The segment at 126 to 163 is LID; that stretch reads GRRICPTCGATYHVIYNPPKVEGVCDIDGSALVQREDD. ATP is bound at residue Arg-127. Zn(2+) contacts are provided by Cys-130 and Cys-133. Position 136 to 137 (136 to 137) interacts with ATP; that stretch reads TY. The Zn(2+) site is built by Cys-150 and Asp-153. AMP is bound by residues Arg-160 and Arg-171. Arg-199 is a binding site for ATP.

This sequence belongs to the adenylate kinase family. Monomer.

It localises to the cytoplasm. The enzyme catalyses AMP + ATP = 2 ADP. It participates in purine metabolism; AMP biosynthesis via salvage pathway; AMP from ADP: step 1/1. In terms of biological role, catalyzes the reversible transfer of the terminal phosphate group between ATP and AMP. Plays an important role in cellular energy homeostasis and in adenine nucleotide metabolism. The sequence is that of Adenylate kinase from Exiguobacterium sibiricum (strain DSM 17290 / CCUG 55495 / CIP 109462 / JCM 13490 / 255-15).